The primary structure comprises 99 residues: Cytochrome c-555 (99 aa).

Heme c contacts are provided by Cys-23, Cys-26, His-27, and Met-73.

In terms of processing, binds 1 heme c group covalently per subunit.

This chain is Cytochrome c-555, found in Prosthecochloris aestuarii.